The sequence spans 267 residues: MASSEETPRSLAGKVALVTGAGRGIGKGIAVELAKRGASVVVNYNSAEKPAQEVVDEIAKTGSRAVAIKADITKVPEVSRLFQEALQHFGHLDIVVSNSGTEVFKPEEEVTEEDYDRVFNLNTRAQFFIAQHAYVHLRNGGRIVLMSSVAANMSGIPNHALYAGSKAAVEGFTRSFAVDAGHRKITVNAIAPGGVKTDMYDANAWHYVPNGKPGMPMEEIDKGLAAFCPLGRVAVPQDIGRVVAFLAHPDSEWVNGQVILLTGGSVT.

NADP(+) contacts are provided by Ile-25, Asn-45, Asp-71, and Asn-98. Active-site proton donor residues include Ser-147 and Ser-148. Tyr-162, Lys-166, Val-195, and Thr-197 together coordinate NADP(+). Tyr-162 functions as the Proton acceptor in the catalytic mechanism. Lys-166 (lowers pKa of active site Tyr) is an active-site residue.

It belongs to the short-chain dehydrogenases/reductases (SDR) family.

Its function is as follows. Hydroxynaphthalene reductase-like protein; part of the Pks2 gene cluster that mediates the formation of infectious structures (appressoria), enabling these fungi to kill insects faster. The product of the Pks2 gene cluster is different from the one of Pks1 and has still not been identified. The sequence is that of Hydroxynaphthalene reductase-like protein Arp2 from Metarhizium majus (strain ARSEF 297).